The chain runs to 394 residues: Elongation factor Tu (394 aa).

In terms of domain architecture, tr-type G spans 10-204; that stretch reads KPHINVGTIG…FLDSYIPEPK (195 aa). The tract at residues 19 to 26 is G1; it reads GHVDHGKT. Position 19–26 (19–26) interacts with GTP; the sequence is GHVDHGKT. T26 contacts Mg(2+). The segment at 60-64 is G2; it reads GITIN. Residues 81-84 form a G3 region; the sequence is DCPG. Residues 81–85 and 136–139 each bind GTP; these read DCPGH and NKCD. Residues 136 to 139 are G4; that stretch reads NKCD. The interval 174–176 is G5; sequence SAL.

Belongs to the TRAFAC class translation factor GTPase superfamily. Classic translation factor GTPase family. EF-Tu/EF-1A subfamily. Monomer.

It localises to the cytoplasm. The enzyme catalyses GTP + H2O = GDP + phosphate + H(+). GTP hydrolase that promotes the GTP-dependent binding of aminoacyl-tRNA to the A-site of ribosomes during protein biosynthesis. The chain is Elongation factor Tu from Buchnera aphidicola subsp. Acyrthosiphon pisum (strain 5A).